Consider the following 1190-residue polypeptide: ATPase histone chaperone abo1 (1190 aa).

Over residues 1 to 11 (MKEEASEHGGS) the composition is skewed to basic and acidic residues. 2 disordered regions span residues 1 to 185 (MKEE…RKTH) and 204 to 253 (YIDS…DLAD). Acidic residues-rich tracts occupy residues 52 to 62 (QEDEGDEDWEE) and 82 to 106 (SEGDDEPFEVSESSALEDELSDSED). Residues 112–131 (VRSKPKYKPGTRRSTRLRNR) are compositionally biased toward basic residues. The span at 141–152 (EEHRPILRERTS) shows a compositional bias: basic and acidic residues. Residue 309 to 314 (PGTGKT) participates in ATP binding. Residues 794 to 922 (RLLNKLKIKL…ANVLLGVEDM (129 aa)) form the Bromo domain.

It belongs to the AAA ATPase family. In terms of assembly, homohexamer. Interacts with the FACT complex subunits spt16 and pob3. Interacts with histone H3-H4 (via N-terminus).

It is found in the nucleus. It localises to the chromosome. The catalysed reaction is ATP + H2O = ADP + phosphate + H(+). Its function is as follows. ATPase histone chaperone which facilitates loading of histone H3-H4 onto DNA in an ATP-dependent manner. Plays a genome-wide role in nucleosome organization and establishment of chromatin. Also plays a role in heterochromatin assembly by stabilizing recruitment of the histone methyltransferase clr4 to methylated histone H3, to promote the transition from H3K9me2 to H3K9me3. This Schizosaccharomyces pombe (strain 972 / ATCC 24843) (Fission yeast) protein is ATPase histone chaperone abo1.